Reading from the N-terminus, the 586-residue chain is Lipoprotein LpqB (586 aa).

The signal sequence occupies residues 1–17 (MVRSVFALVFAAVLLGG). Residue Cys-18 is the site of N-palmitoyl cysteine attachment. The S-diacylglycerol cysteine moiety is linked to residue Cys-18. The tract at residues 26–45 (APQAIGTVERPAPSNLPKPI) is disordered.

Belongs to the LpqB lipoprotein family.

It localises to the cell membrane. This Mycobacterium ulcerans (strain Agy99) protein is Lipoprotein LpqB.